The primary structure comprises 584 residues: Ras-specific guanine nucleotide-releasing factor RalGPS1 (584 aa).

Polar residues predominate over residues 1 to 13; the sequence is MDLMNGQSSSVNI. Disordered regions lie at residues 1-29, 285-338, and 380-407; these read MDLM…SLSD, IEPG…IPHG, and HVPS…SELS. The span at 14-26 shows a compositional bias: low complexity; that stretch reads AATASEKSSSSES. The Ras-GEF domain maps to 50 to 288; the sequence is TPEEYAGQIT…YKLSLKIEPG (239 aa). Residues 326 to 329 carry the PXXP motif; that stretch reads PTPP. A compositionally biased stretch (low complexity) spans 388–404; it reads ESSTLSSGISIGSSDGS. Residues 458-570 enclose the PH domain; it reads AVTIQGVLRR…WFKHLSAACQ (113 aa).

Its subcellular location is the cytoplasm. It localises to the cell membrane. In terms of biological role, guanine nucleotide exchange factor. May be involved in cytoskeletal organization. The chain is Ras-specific guanine nucleotide-releasing factor RalGPS1 (RALGPS1) from Gallus gallus (Chicken).